A 217-amino-acid chain; its full sequence is GTP cyclohydrolase 1 (217 aa).

Zn(2+)-binding residues include Cys-108, His-111, and Cys-179.

The protein belongs to the GTP cyclohydrolase I family. As to quaternary structure, toroid-shaped homodecamer, composed of two pentamers of five dimers.

It carries out the reaction GTP + H2O = 7,8-dihydroneopterin 3'-triphosphate + formate + H(+). It functions in the pathway cofactor biosynthesis; 7,8-dihydroneopterin triphosphate biosynthesis; 7,8-dihydroneopterin triphosphate from GTP: step 1/1. The protein is GTP cyclohydrolase 1 of Shewanella denitrificans (strain OS217 / ATCC BAA-1090 / DSM 15013).